Here is a 315-residue protein sequence, read N- to C-terminus: Aspartate carbamoyltransferase catalytic subunit (315 aa).

Carbamoyl phosphate-binding residues include R55 and T56. K83 is an L-aspartate binding site. Residues R105, H138, and Q141 each coordinate carbamoyl phosphate. L-aspartate is bound by residues R171 and R225. Carbamoyl phosphate contacts are provided by G266 and P267.

Belongs to the aspartate/ornithine carbamoyltransferase superfamily. ATCase family. Heterododecamer (2C3:3R2) of six catalytic PyrB chains organized as two trimers (C3), and six regulatory PyrI chains organized as three dimers (R2).

The enzyme catalyses carbamoyl phosphate + L-aspartate = N-carbamoyl-L-aspartate + phosphate + H(+). It functions in the pathway pyrimidine metabolism; UMP biosynthesis via de novo pathway; (S)-dihydroorotate from bicarbonate: step 2/3. In terms of biological role, catalyzes the condensation of carbamoyl phosphate and aspartate to form carbamoyl aspartate and inorganic phosphate, the committed step in the de novo pyrimidine nucleotide biosynthesis pathway. The polypeptide is Aspartate carbamoyltransferase catalytic subunit (Mycolicibacterium gilvum (strain PYR-GCK) (Mycobacterium gilvum (strain PYR-GCK))).